A 446-amino-acid polypeptide reads, in one-letter code: Tubulin beta-2 chain (446 aa).

GTP contacts are provided by Gln-11, Glu-69, Ser-138, Gly-142, Thr-143, Gly-144, Asn-204, and Asn-226. Mg(2+) is bound at residue Glu-69. Positions 424–446 are disordered; it reads QYQEATADEEGEFDEDEEGGGDE. A compositionally biased stretch (acidic residues) spans 429–446; sequence TADEEGEFDEDEEGGGDE.

The protein belongs to the tubulin family. As to quaternary structure, dimer of alpha and beta chains. A typical microtubule is a hollow water-filled tube with an outer diameter of 25 nm and an inner diameter of 15 nM. Alpha-beta heterodimers associate head-to-tail to form protofilaments running lengthwise along the microtubule wall with the beta-tubulin subunit facing the microtubule plus end conferring a structural polarity. Microtubules usually have 13 protofilaments but different protofilament numbers can be found in some organisms and specialized cells. Mg(2+) is required as a cofactor.

The protein localises to the cytoplasm. It is found in the cytoskeleton. Tubulin is the major constituent of microtubules, a cylinder consisting of laterally associated linear protofilaments composed of alpha- and beta-tubulin heterodimers. Microtubules grow by the addition of GTP-tubulin dimers to the microtubule end, where a stabilizing cap forms. Below the cap, tubulin dimers are in GDP-bound state, owing to GTPase activity of alpha-tubulin. The sequence is that of Tubulin beta-2 chain (betaTub85D) from Drosophila erecta (Fruit fly).